The sequence spans 357 residues: Glutamine synthetase root isozyme 5 (357 aa).

In terms of domain architecture, GS beta-grasp spans 19 to 99 (IIAEYIWVGG…VMCDCYTPQG (81 aa)). The 252-residue stretch at 106–357 (KRYKAATVFS…ADTTILWKGN (252 aa)) folds into the GS catalytic domain.

It belongs to the glutamine synthetase family. As to quaternary structure, homooctamer. Found mainly in the cortical tissues of seedling roots, stem and seedling shoot.

It localises to the cytoplasm. The catalysed reaction is L-glutamate + NH4(+) + ATP = L-glutamine + ADP + phosphate + H(+). Its function is as follows. Plays a role in the flow of nitrogen into nitrogenous organic compounds. This is Glutamine synthetase root isozyme 5 (GS1-5) from Zea mays (Maize).